The primary structure comprises 290 residues: UPF0761 membrane protein YihY (290 aa).

Topologically, residues 1-43 are cytoplasmic; sequence MLKTVHQKAGRHTRPVRAWLKLLWQRIDEDNMTTLAGNLAYVS. A helical membrane pass occupies residues 44–64; it reads LLSLVPLIAVVFALFAAFPMF. Topologically, residues 65-103 are periplasmic; sequence SDVSIQLRHFIFANFMPATGDVIQRYIEQFVANSNKMTA. Residues 104–124 traverse the membrane as a helical segment; that stretch reads VGACGLIVTALLLMYAIDSAL. Over 125 to 139 the chain is Cytoplasmic; it reads NTIWRSKRTRPKVYS. The helical transmembrane segment at 140–160 threads the bilayer; it reads FAVYWMILTLGPLLAGVSLAI. Over 161–179 the chain is Periplasmic; it reads SSYLLSLRWASDLNTVIDN. Residues 180–200 form a helical membrane-spanning segment; sequence VLHILPLLLSWISFWLLYSIV. Topologically, residues 201 to 209 are cytoplasmic; it reads PTTRVPNRD. Residues 210–230 traverse the membrane as a helical segment; the sequence is ALVGAFVAALLFEAGKKGFAL. The Periplasmic portion of the chain corresponds to 231–243; sequence YITMFPSYQLIYG. The chain crosses the membrane as a helical span at residues 244 to 264; sequence VLAVIPILFVWVYWTWCIVLL. Over 265-290 the chain is Cytoplasmic; the sequence is GAEITVTLGEYRKLKQAAEQEEADQP.

Belongs to the UPF0761 family.

It is found in the cell inner membrane. The protein is UPF0761 membrane protein YihY of Salmonella typhimurium (strain LT2 / SGSC1412 / ATCC 700720).